The sequence spans 185 residues: Lactoylglutathione lyase (185 aa).

The interval 1 to 21 (MAAEPKESPSNNPGLHTTPDE) is disordered. The 148-residue stretch at 27–174 (IMQQTMFRIK…DGYWIEIFDR (148 aa)) folds into the VOC domain. The substrate site is built by glutamine 30 and arginine 34. Glutamine 30 is a Zn(2+) binding site. Glutamate 96 contributes to the Zn(2+) binding site. Substrate is bound by residues asparagine 100, arginine 120, histidine 124, and 154–155 (KM). Histidine 124 serves as a coordination point for Zn(2+). Glutamate 170 is a binding site for Zn(2+). Glutamate 170 functions as the Proton donor/acceptor in the catalytic mechanism.

It belongs to the glyoxalase I family. Homodimer. Requires Zn(2+) as cofactor.

The catalysed reaction is (R)-S-lactoylglutathione = methylglyoxal + glutathione. The protein operates within secondary metabolite metabolism; methylglyoxal degradation; (R)-lactate from methylglyoxal: step 1/2. Its function is as follows. Catalyzes the conversion of hemimercaptal, formed from methylglyoxal and glutathione, to S-lactoylglutathione. Active toward the hemithioacetal adducts formed by reacting methylglyoxal or phenylglyoxal with glutathione, homoglutathione or gamma-glutamylcysteine, showing no preference for homoglutathione adducts over glutathione adducts. This chain is Lactoylglutathione lyase (GLXI), found in Glycine max (Soybean).